Consider the following 154-residue polypeptide: SsrA-binding protein (154 aa).

Belongs to the SmpB family.

It is found in the cytoplasm. Required for rescue of stalled ribosomes mediated by trans-translation. Binds to transfer-messenger RNA (tmRNA), required for stable association of tmRNA with ribosomes. tmRNA and SmpB together mimic tRNA shape, replacing the anticodon stem-loop with SmpB. tmRNA is encoded by the ssrA gene; the 2 termini fold to resemble tRNA(Ala) and it encodes a 'tag peptide', a short internal open reading frame. During trans-translation Ala-aminoacylated tmRNA acts like a tRNA, entering the A-site of stalled ribosomes, displacing the stalled mRNA. The ribosome then switches to translate the ORF on the tmRNA; the nascent peptide is terminated with the 'tag peptide' encoded by the tmRNA and targeted for degradation. The ribosome is freed to recommence translation, which seems to be the essential function of trans-translation. In Acetivibrio thermocellus (strain ATCC 27405 / DSM 1237 / JCM 9322 / NBRC 103400 / NCIMB 10682 / NRRL B-4536 / VPI 7372) (Clostridium thermocellum), this protein is SsrA-binding protein.